We begin with the raw amino-acid sequence, 160 residues long: Small ribosomal subunit protein uS7 (160 aa).

The protein belongs to the universal ribosomal protein uS7 family. Part of the 30S ribosomal subunit. Contacts proteins S9 and S11.

One of the primary rRNA binding proteins, it binds directly to 16S rRNA where it nucleates assembly of the head domain of the 30S subunit. Is located at the subunit interface close to the decoding center, probably blocks exit of the E-site tRNA. This Rickettsia prowazekii (strain Madrid E) protein is Small ribosomal subunit protein uS7.